We begin with the raw amino-acid sequence, 281 residues long: Cis-2,3-dihydrobiphenyl-2,3-diol dehydrogenase (281 aa).

10–34 (ITGGASGLGRALVDRFVAEGARVAV) is an NAD(+) binding site. A substrate-binding site is contributed by S142. Residue Y155 is the Proton acceptor of the active site.

This sequence belongs to the short-chain dehydrogenases/reductases (SDR) family. In terms of assembly, homotetramer.

The enzyme catalyses (2R,3S)-3-phenylcyclohexa-3,5-diene-1,2-diol + NAD(+) = biphenyl-2,3-diol + NADH + H(+). Its pathway is xenobiotic degradation; biphenyl degradation; 2-hydroxy-2,4-pentadienoate and benzoate from biphenyl: step 2/4. This Comamonas testosteroni (Pseudomonas testosteroni) protein is Cis-2,3-dihydrobiphenyl-2,3-diol dehydrogenase (bphB).